The chain runs to 156 residues: Probable succinate transporter subunit YjjB (156 aa).

4 helical membrane passes run 7-27, 54-74, 86-106, and 128-148; these read WALL…AMVF, FGMN…VIGI, VFTV…TAMI, and FLKA…PGLW.

The protein belongs to the ThrE exporter (TC 2.A.79) family. In terms of assembly, the transporter is composed of YjjB and YjjP.

The protein resides in the cell inner membrane. Involved in succinate export with YjjP. Both proteins are required for export. In Yersinia pseudotuberculosis serotype I (strain IP32953), this protein is Probable succinate transporter subunit YjjB.